A 1755-amino-acid polypeptide reads, in one-letter code: Transposon Ty1-LR2 Gag-Pol polyprotein (1755 aa).

Polar residues-rich tracts occupy residues 1 to 23 (MESQQLSQHSPISHGSACASVTS), 48 to 60 (TKANSQQTTTPAS), and 127 to 152 (QSQFPQYPSSVGTPLSTPSPESGNTF). 3 disordered regions span residues 1-93 (MESQ…MMTQ), 126-174 (PQSQ…PPPM), and 352-421 (GSRN…SKST). A compositionally biased stretch (low complexity) spans 153 to 165 (TDSSSADSDMTST). The tract at residues 299–401 (NNGIHINNKV…NSKSKTARAH (103 aa)) is RNA-binding. Positions 402–418 (NVSTSNNSPSTDNDSIS) are enriched in low complexity. At Ser-416 the chain carries Phosphoserine. Catalysis depends on Asp-461, which acts as the For protease activity; shared with dimeric partner. The segment at 583–640 (NVHTSESTRKYPYPFIHRMLAHANAPTIRYSLKNNTITYFNESDVDWSSAIDYQCPDC) is integrase-type zinc finger-like. The Integrase catalytic domain maps to 660-835 (NSYEPFQYLH…AGLDISTLLP (176 aa)). The Mg(2+) site is built by Asp-671 and Asp-736. Disordered stretches follow at residues 956–1087 (SKAV…ETEK), 1092–1111 (RSPSIDASPPENNSSHNIVP), and 1130–1187 (DLPL…DNET). Residues 960–969 (SPTDSTPPST) show a composition bias toward low complexity. Positions 1005–1015 (STPQISNIEST) are enriched in polar residues. The segment covering 1038–1053 (ESSHASKSKDFRHSDS) has biased composition (basic and acidic residues). Polar residues-rich tracts occupy residues 1054 to 1082 (YSENETNHTNVPISSTGGTNNKTVPQISD) and 1101 to 1111 (PENNSSHNIVP). A Bipartite nuclear localization signal motif is present at residues 1178 to 1212 (KKRSLEDNETEIKVSRDTWNTKNMRSLEPPRSKKR). Residues 1338–1476 (NNYYITQLDI…DILGLEIKYQ (139 aa)) enclose the Reverse transcriptase Ty1/copia-type domain. Asp-1346, Asp-1427, Asp-1428, Asp-1610, Glu-1652, and Asp-1685 together coordinate Mg(2+). In terms of domain architecture, RNase H Ty1/copia-type spans 1610–1752 (DASYGNQPYY…IKTFKLLTNK (143 aa)).

As to quaternary structure, the capsid protein forms a homotrimer, from which the VLPs are assembled. The protease is a homodimer, whose active site consists of two apposed aspartic acid residues. Post-translationally, initially, virus-like particles (VLPs) are composed of the structural unprocessed proteins Gag and Gag-Pol, and also contain the host initiator methionine tRNA (tRNA(i)-Met) which serves as a primer for minus-strand DNA synthesis, and a dimer of genomic Ty RNA. Processing of the polyproteins occurs within the particle and proceeds by an ordered pathway, called maturation. First, the protease (PR) is released by autocatalytic cleavage of the Gag-Pol polyprotein yielding capsid protein p45 and a Pol-p154 precursor protein. This cleavage is a prerequisite for subsequent processing of Pol-p154 at the remaining sites to release the mature structural and catalytic proteins. Maturation takes place prior to the RT reaction and is required to produce transposition-competent VLPs.

The protein resides in the cytoplasm. It localises to the nucleus. It carries out the reaction DNA(n) + a 2'-deoxyribonucleoside 5'-triphosphate = DNA(n+1) + diphosphate. It catalyses the reaction Endonucleolytic cleavage to 5'-phosphomonoester.. Capsid protein (CA) is the structural component of the virus-like particle (VLP), forming the shell that encapsulates the retrotransposons dimeric RNA genome. The particles are assembled from trimer-clustered units and there are holes in the capsid shells that allow for the diffusion of macromolecules. CA also has nucleocapsid-like chaperone activity, promoting primer tRNA(i)-Met annealing to the multipartite primer-binding site (PBS), dimerization of Ty1 RNA and initiation of reverse transcription. In terms of biological role, the aspartyl protease (PR) mediates the proteolytic cleavages of the Gag and Gag-Pol polyproteins after assembly of the VLP. Functionally, reverse transcriptase/ribonuclease H (RT) is a multifunctional enzyme that catalyzes the conversion of the retro-elements RNA genome into dsDNA within the VLP. The enzyme displays a DNA polymerase activity that can copy either DNA or RNA templates, and a ribonuclease H (RNase H) activity that cleaves the RNA strand of RNA-DNA heteroduplexes during plus-strand synthesis and hydrolyzes RNA primers. The conversion leads to a linear dsDNA copy of the retrotransposon that includes long terminal repeats (LTRs) at both ends. Its function is as follows. Integrase (IN) targets the VLP to the nucleus, where a subparticle preintegration complex (PIC) containing at least integrase and the newly synthesized dsDNA copy of the retrotransposon must transit the nuclear membrane. Once in the nucleus, integrase performs the integration of the dsDNA into the host genome. The sequence is that of Transposon Ty1-LR2 Gag-Pol polyprotein (TY1B-LR2) from Saccharomyces cerevisiae (strain ATCC 204508 / S288c) (Baker's yeast).